The following is a 339-amino-acid chain: Ketol-acid reductoisomerase (NADP(+)) (339 aa).

Residues 1–182 (MRVYYDRDAD…GGGRAGIIET (182 aa)) enclose the KARI N-terminal Rossmann domain. NADP(+)-binding positions include 24 to 27 (YGSQ), arginine 48, serine 51, threonine 53, and 83 to 86 (DELQ). Residue histidine 108 is part of the active site. Position 134 (glycine 134) interacts with NADP(+). The region spanning 183–328 (TFKEECETDL…AKLRGMMPWI (146 aa)) is the KARI C-terminal knotted domain. Residues aspartate 191, glutamate 195, glutamate 227, and glutamate 231 each contribute to the Mg(2+) site. Serine 252 serves as a coordination point for substrate.

Belongs to the ketol-acid reductoisomerase family. Mg(2+) is required as a cofactor.

It catalyses the reaction (2R)-2,3-dihydroxy-3-methylbutanoate + NADP(+) = (2S)-2-acetolactate + NADPH + H(+). It carries out the reaction (2R,3R)-2,3-dihydroxy-3-methylpentanoate + NADP(+) = (S)-2-ethyl-2-hydroxy-3-oxobutanoate + NADPH + H(+). It participates in amino-acid biosynthesis; L-isoleucine biosynthesis; L-isoleucine from 2-oxobutanoate: step 2/4. The protein operates within amino-acid biosynthesis; L-valine biosynthesis; L-valine from pyruvate: step 2/4. In terms of biological role, involved in the biosynthesis of branched-chain amino acids (BCAA). Catalyzes an alkyl-migration followed by a ketol-acid reduction of (S)-2-acetolactate (S2AL) to yield (R)-2,3-dihydroxy-isovalerate. In the isomerase reaction, S2AL is rearranged via a Mg-dependent methyl migration to produce 3-hydroxy-3-methyl-2-ketobutyrate (HMKB). In the reductase reaction, this 2-ketoacid undergoes a metal-dependent reduction by NADPH to yield (R)-2,3-dihydroxy-isovalerate. The chain is Ketol-acid reductoisomerase (NADP(+)) from Methylorubrum extorquens (strain CM4 / NCIMB 13688) (Methylobacterium extorquens).